Reading from the N-terminus, the 337-residue chain is tRNA N6-adenosine threonylcarbamoyltransferase (337 aa).

Fe cation-binding residues include His111 and His115. Substrate contacts are provided by residues Leu134–Gly138, Asp167, Gly180, and Asn272. Position 300 (Asp300) interacts with Fe cation.

Belongs to the KAE1 / TsaD family. Requires Fe(2+) as cofactor.

It is found in the cytoplasm. It catalyses the reaction L-threonylcarbamoyladenylate + adenosine(37) in tRNA = N(6)-L-threonylcarbamoyladenosine(37) in tRNA + AMP + H(+). Required for the formation of a threonylcarbamoyl group on adenosine at position 37 (t(6)A37) in tRNAs that read codons beginning with adenine. Is involved in the transfer of the threonylcarbamoyl moiety of threonylcarbamoyl-AMP (TC-AMP) to the N6 group of A37, together with TsaE and TsaB. TsaD likely plays a direct catalytic role in this reaction. The polypeptide is tRNA N6-adenosine threonylcarbamoyltransferase (Escherichia coli O45:K1 (strain S88 / ExPEC)).